Reading from the N-terminus, the 288-residue chain is Solute carrier family 25 member 45 (288 aa).

Solcar repeat units follow at residues 1 to 83 (MPVE…TLLV), 97 to 191 (PSYM…LCRQ), and 199 to 286 (PSSA…LLRW). Transmembrane regions (helical) follow at residues 6–26 (FVAG…FDTV), 63–83 (IASI…TLLV), 100–120 (MHIF…LAPF), 166–186 (GAWA…ITYE), 202–222 (ATVL…ATPL), and 266–286 (SARA…LLRW).

It belongs to the mitochondrial carrier (TC 2.A.29) family.

It is found in the mitochondrion inner membrane. The protein is Solute carrier family 25 member 45 (SLC25A45) of Homo sapiens (Human).